Reading from the N-terminus, the 80-residue chain is Large ribosomal subunit protein uL24 (80 aa).

Belongs to the universal ribosomal protein uL24 family. As to quaternary structure, part of the 50S ribosomal subunit.

Its function is as follows. One of two assembly initiator proteins, it binds directly to the 5'-end of the 23S rRNA, where it nucleates assembly of the 50S subunit. One of the proteins that surrounds the polypeptide exit tunnel on the outside of the subunit. The protein is Large ribosomal subunit protein uL24 of Chlorobaculum parvum (strain DSM 263 / NCIMB 8327) (Chlorobium vibrioforme subsp. thiosulfatophilum).